Here is a 237-residue protein sequence, read N- to C-terminus: Ribonuclease PH (237 aa).

Phosphate is bound by residues Arg86 and 124 to 126 (GTR).

This sequence belongs to the RNase PH family. In terms of assembly, homohexameric ring arranged as a trimer of dimers.

The catalysed reaction is tRNA(n+1) + phosphate = tRNA(n) + a ribonucleoside 5'-diphosphate. In terms of biological role, phosphorolytic 3'-5' exoribonuclease that plays an important role in tRNA 3'-end maturation. Removes nucleotide residues following the 3'-CCA terminus of tRNAs; can also add nucleotides to the ends of RNA molecules by using nucleoside diphosphates as substrates, but this may not be physiologically important. Probably plays a role in initiation of 16S rRNA degradation (leading to ribosome degradation) during starvation. The sequence is that of Ribonuclease PH from Shewanella loihica (strain ATCC BAA-1088 / PV-4).